The chain runs to 139 residues: Large ribosomal subunit protein uL22 (139 aa).

Residues 118–139 are disordered; that stretch reads VEVESRPKKVASKSKSQKGSAR. The span at 125–139 shows a compositional bias: basic residues; the sequence is KKVASKSKSQKGSAR.

Belongs to the universal ribosomal protein uL22 family. As to quaternary structure, part of the 50S ribosomal subunit.

Functionally, this protein binds specifically to 23S rRNA; its binding is stimulated by other ribosomal proteins, e.g. L4, L17, and L20. It is important during the early stages of 50S assembly. It makes multiple contacts with different domains of the 23S rRNA in the assembled 50S subunit and ribosome. Its function is as follows. The globular domain of the protein is located near the polypeptide exit tunnel on the outside of the subunit, while an extended beta-hairpin is found that lines the wall of the exit tunnel in the center of the 70S ribosome. The polypeptide is Large ribosomal subunit protein uL22 (Saccharopolyspora erythraea (strain ATCC 11635 / DSM 40517 / JCM 4748 / NBRC 13426 / NCIMB 8594 / NRRL 2338)).